The following is a 353-amino-acid chain: tRNA-specific 2-thiouridylase MnmA 2 (353 aa).

Residues 9 to 16 (AMSGGVDS) and Met-35 contribute to the ATP site. The active-site Nucleophile is the Cys-98. The cysteines at positions 98 and 194 are disulfide-linked. Residue Gly-122 participates in ATP binding. Positions 144–146 (KDQ) are interaction with tRNA. The active-site Cysteine persulfide intermediate is the Cys-194. Residues 300 to 301 (RY) form an interaction with tRNA region.

It belongs to the MnmA/TRMU family.

The protein resides in the cytoplasm. The enzyme catalyses S-sulfanyl-L-cysteinyl-[protein] + uridine(34) in tRNA + AH2 + ATP = 2-thiouridine(34) in tRNA + L-cysteinyl-[protein] + A + AMP + diphosphate + H(+). In terms of biological role, catalyzes the 2-thiolation of uridine at the wobble position (U34) of tRNA, leading to the formation of s(2)U34. In Clostridium botulinum (strain Langeland / NCTC 10281 / Type F), this protein is tRNA-specific 2-thiouridylase MnmA 2.